Consider the following 558-residue polypeptide: Factor VII-activating protease (558 aa).

An N-terminal signal peptide occupies residues 1–23; that stretch reads MFVRMLVFRVLLLIALVGKSVIG. 3 EGF-like domains span residues 71–107, 109–146, and 148–186; these read DDDPCQSNPCEHGGDCIIRGDTFSCSCPAPFSGSRCQ, AQNKCKDNPCVHGDCLITQKHPYYRCACKYPYTGPDCS, and VLPACRPNPCQNGGVCSRHRRRSRFTCACPDQYKGKFCE. 18 cysteine pairs are disulfide-bonded: Cys75–Cys86, Cys80–Cys95, Cys97–Cys106, Cys113–Cys123, Cys118–Cys134, Cys136–Cys145, Cys152–Cys163, Cys157–Cys174, Cys176–Cys185, Cys192–Cys274, Cys213–Cys255, Cys244–Cys269, Cys299–Cys433, Cys345–Cys361, Cys353–Cys422, Cys445–Cys513, Cys475–Cys491, and Cys503–Cys531. Residues 191-274 form the Kringle domain; the sequence is DCYVGDGYSY…KWEYCDVTVC (84 aa). The region spanning 312-553 is the Peptidase S1 domain; that stretch reads IYGGFKSTAG…FLNWIKTTMH (242 aa). Catalysis depends on charge relay system residues His360 and Asp409. Ser507 serves as the catalytic Charge relay system.

Belongs to the peptidase S1 family. In terms of assembly, heterodimer; disulfide-linked. Heterodimer of a 50 kDa heavy and a 27 kDa light chain linked by a disulfide bond. Post-translationally, proteolytic cleavage at Gly-23 or Met-27 can give rise to the 50 kDa heavy chain (HC) and cleavage at Arg-311 or Lys-317 can give rise to the 27 kDa light chain (LC). The HC can undergo further proteolytic cleavage giving rise to a 26 kDa fragment. The LC can undergo further proteolytic cleavage at Arg-311 leading to a 17-kDa fragment and at Arg-478 leading to a 8-kDa fragment. In terms of tissue distribution, liver and kidney.

The protein localises to the secreted. Cleaves the alpha-chain at multiple sites and the beta-chain between 'Lys-53' and 'Lys-54' but not the gamma-chain of fibrinogen and therefore does not initiate the formation of the fibrin clot and does not cause the fibrinolysis directly. It does not cleave (activate) prothrombin and plasminogen but converts the inactive single chain urinary plasminogen activator (pro-urokinase) to the active two chain form. Activates coagulation factor VII. May function as a tumor suppressor negatively regulating cell proliferation and cell migration. The sequence is that of Factor VII-activating protease from Mus musculus (Mouse).